The chain runs to 271 residues: MNQWRVIHNKSYEGAMNMAIDEAIFTAYKKGHNKPTLRFYTWEPACLSIGYFQKLEDEIDLDKCRCMNIDYTRRITGGRAVLHDNELTYSIIIGEDNPLIDKSINLSYRYISEGLVKGLNLSGIETDNLNRGERISRENLSAACFNAHASYEVTINNKKVIGSAQSRKDGVLLQHGSIILDFDVEKLFKLIKTKTPELKERAMKFTAKKASGIENEIGRKIDIDILQKNIVKGLAEQFNVEFVEGDLTDYEKQLVKELYEKYKNEEYNKKR.

The BPL/LPL catalytic domain maps to 31-242 (GHNKPTLRFY…GLAEQFNVEF (212 aa)). Cysteine 144 serves as the catalytic Acyl-thioester intermediate.

Belongs to the octanoyltransferase LipM family. In terms of assembly, monomer.

The enzyme catalyses octanoyl-[ACP] + L-lysyl-[protein] = N(6)-octanoyl-L-lysyl-[protein] + holo-[ACP] + H(+). The protein operates within protein modification; protein lipoylation via endogenous pathway; protein N(6)-(lipoyl)lysine from octanoyl-[acyl-carrier-protein]. In terms of biological role, catalyzes the transfer of endogenously produced octanoic acid from octanoyl-acyl-carrier-protein onto the lipoyl domain of GcvH, an intermediate carrier during protein lipoylation. The chain is Octanoyltransferase LipM from Clostridioides difficile (strain 630) (Peptoclostridium difficile).